Reading from the N-terminus, the 34-residue chain is Cytochrome b6-f complex subunit 5 (34 aa).

A helical transmembrane segment spans residues 5 to 25; the sequence is LLSGIVLGLVPVTLAGLFVTA.

The protein belongs to the PetG family. As to quaternary structure, the 4 large subunits of the cytochrome b6-f complex are cytochrome b6, subunit IV (17 kDa polypeptide, PetD), cytochrome f and the Rieske protein, while the 4 small subunits are PetG, PetL, PetM and PetN. The complex functions as a dimer.

It localises to the plastid. Its subcellular location is the chloroplast thylakoid membrane. In terms of biological role, component of the cytochrome b6-f complex, which mediates electron transfer between photosystem II (PSII) and photosystem I (PSI), cyclic electron flow around PSI, and state transitions. PetG is required for either the stability or assembly of the cytochrome b6-f complex. This Oltmannsiellopsis viridis (Marine flagellate) protein is Cytochrome b6-f complex subunit 5.